The sequence spans 37 residues: Photosystem II reaction center protein L (37 aa).

The Cytoplasmic portion of the chain corresponds to Met-1–Asn-13. The helical transmembrane segment at Arg-14–Phe-35 threads the bilayer. Residues Phe-36–Asn-37 are Lumenal-facing.

In terms of assembly, PSII is composed of 1 copy each of membrane proteins PsbA, PsbB, PsbC, PsbD, PsbE, PsbF, PsbH, PsbI, PsbJ, PsbK, PsbL, PsbM, PsbT, PsbX, PsbY, PsbZ, Psb30/Ycf12, peripheral proteins PsbO, CyanoQ (PsbQ), PsbU, PsbV and a large number of cofactors. It forms dimeric complexes. Part of a photosystem II (PSII) assembly intermediate complex PSII-I; crystallized from a strain deleted of psbJ, it forms monomeric PSII before addition of the oxygen evolving complex. PSII-I includes 3 assembly factors not found in mature PSII (Psb27, Psb28 and Psb34). It depends on PSII binds multiple chlorophylls, carotenoids and specific lipids. as a cofactor.

The protein resides in the cellular thylakoid membrane. In terms of biological role, one of the components of the core complex of photosystem II (PSII). PSII is a light-driven water:plastoquinone oxidoreductase that uses light energy to abstract electrons from H(2)O, generating O(2) and a proton gradient subsequently used for ATP formation. It consists of a core antenna complex that captures photons, and an electron transfer chain that converts photonic excitation into a charge separation. This subunit is found at the monomer-monomer interface and is required for correct PSII assembly and/or dimerization. This subunit may make specific contacts with lipid(s). The chain is Photosystem II reaction center protein L from Thermosynechococcus vestitus (strain NIES-2133 / IAM M-273 / BP-1).